The chain runs to 155 residues: UPF0060 membrane protein MA_3936 (155 aa).

A run of 3 helical transmembrane segments spans residues 8-28, 35-55, and 62-82; these read LCPF…ICLW, AVFG…PTFQ, and VYAA…LFVD.

Belongs to the UPF0060 family.

Its subcellular location is the cell membrane. The protein is UPF0060 membrane protein MA_3936 of Methanosarcina acetivorans (strain ATCC 35395 / DSM 2834 / JCM 12185 / C2A).